The sequence spans 483 residues: V-type proton ATPase subunit H (483 aa).

Ser-483 carries the post-translational modification Phosphoserine.

It belongs to the V-ATPase H subunit family. As to quaternary structure, V-ATPase is a heteromultimeric enzyme made up of two complexes: the ATP-hydrolytic V1 complex and the proton translocation V0 complex. The V1 complex consists of three catalytic AB heterodimers that form a heterohexamer, three peripheral stalks each consisting of EG heterodimers, one central rotor including subunits D and F, and the regulatory subunits C and H. The proton translocation complex V0 consists of the proton transport subunit a, a ring of proteolipid subunits c9c'', rotary subunit d, subunits e and f, and the accessory subunits ATP6AP1/Ac45 and ATP6AP2/PRR. Interacts with AP2M1. Interacts with TM9SF4 in colon cancer cells. (Microbial infection) Interacts with HIV-1 Nef protein. In terms of assembly, (Microbial infection) Interacts with M.tuberculosis PtpA, which blocks V-ATPase trafficking and phagosome acidification. Widely expressed.

Its subcellular location is the cytoplasmic vesicle. The protein localises to the clathrin-coated vesicle membrane. Subunit of the V1 complex of vacuolar(H+)-ATPase (V-ATPase), a multisubunit enzyme composed of a peripheral complex (V1) that hydrolyzes ATP and a membrane integral complex (V0) that translocates protons. V-ATPase is responsible for acidifying and maintaining the pH of intracellular compartments and in some cell types, is targeted to the plasma membrane, where it is responsible for acidifying the extracellular environment. Subunit H is essential for V-ATPase activity, but not for the assembly of the complex. Involved in the endocytosis mediated by clathrin-coated pits, required for the formation of endosomes. In Homo sapiens (Human), this protein is V-type proton ATPase subunit H (ATP6V1H).